A 325-amino-acid polypeptide reads, in one-letter code: Probable isoaspartyl peptidase/L-asparaginase 2 (325 aa).

Thr-195 functions as the Nucleophile in the catalytic mechanism. Substrate-binding positions include 223-226 (RIGD) and 245-248 (TGEG).

It belongs to the Ntn-hydrolase family. Heterotetramer of two alpha and two beta chains arranged as a dimer of alpha/beta heterodimers. Post-translationally, cleaved into an alpha and beta chain by autocatalysis; this activates the enzyme. The N-terminal residue of the beta subunit is responsible for the nucleophile hydrolase activity.

It carries out the reaction Cleavage of a beta-linked Asp residue from the N-terminus of a polypeptide.. Functionally, acts in asparagine catabolism and also in the final steps of protein degradation via hydrolysis of a range of isoaspartyl dipeptides. This Arabidopsis thaliana (Mouse-ear cress) protein is Probable isoaspartyl peptidase/L-asparaginase 2.